A 215-amino-acid polypeptide reads, in one-letter code: Small ribosomal subunit protein uS7 (215 aa).

Belongs to the universal ribosomal protein uS7 family. As to quaternary structure, part of the 30S ribosomal subunit.

Its function is as follows. One of the primary rRNA binding proteins, it binds directly to 16S rRNA where it nucleates assembly of the head domain of the 30S subunit. Is located at the subunit interface close to the decoding center. The sequence is that of Small ribosomal subunit protein uS7 from Pyrococcus furiosus (strain ATCC 43587 / DSM 3638 / JCM 8422 / Vc1).